Here is a 175-residue protein sequence, read N- to C-terminus: Translation initiation factor IF-3 (175 aa).

It belongs to the IF-3 family. In terms of assembly, monomer.

The protein resides in the cytoplasm. IF-3 binds to the 30S ribosomal subunit and shifts the equilibrium between 70S ribosomes and their 50S and 30S subunits in favor of the free subunits, thus enhancing the availability of 30S subunits on which protein synthesis initiation begins. This chain is Translation initiation factor IF-3, found in Staphylococcus saprophyticus subsp. saprophyticus (strain ATCC 15305 / DSM 20229 / NCIMB 8711 / NCTC 7292 / S-41).